A 302-amino-acid chain; its full sequence is RNA polymerase II holoenzyme cyclin-like subunit (302 aa).

Positions 53-142 (QQLIKLGKRM…LGECEFSLIS (90 aa)) constitute a Cyclin N-terminal domain.

Belongs to the cyclin family. Cyclin C subfamily. As to quaternary structure, component of the srb8-11 complex, a regulatory module of the Mediator complex.

The protein resides in the nucleus. Component of the srb8-11 complex. The srb8-11 complex is a regulatory module of the Mediator complex which is itself involved in regulation of basal and activated RNA polymerase II-dependent transcription. The srb8-11 complex may be involved in the transcriptional repression of a subset of genes regulated by Mediator. It may inhibit the association of the Mediator complex with RNA polymerase II to form the holoenzyme complex. The srb8-11 complex phosphorylates the C-terminal domain (CTD) of the largest subunit of RNA polymerase II. The chain is RNA polymerase II holoenzyme cyclin-like subunit (ssn8) from Aspergillus clavatus (strain ATCC 1007 / CBS 513.65 / DSM 816 / NCTC 3887 / NRRL 1 / QM 1276 / 107).